The following is a 428-amino-acid chain: Adenylosuccinate synthetase (428 aa).

GTP-binding positions include 12-18 and 40-42; these read GDEGKGK and GHT. The Proton acceptor role is filled by D13. Mg(2+) contacts are provided by D13 and G40. IMP-binding positions include 13-16, 38-41, T128, R142, Q223, T238, and R302; these read DEGK and NAGH. The active-site Proton donor is H41. A substrate-binding site is contributed by 298-304; the sequence is VTTGRPR. GTP is bound by residues R304, 330 to 332, and 412 to 414; these read KLD and GVG.

The protein belongs to the adenylosuccinate synthetase family. As to quaternary structure, homodimer. Mg(2+) serves as cofactor.

The protein localises to the cytoplasm. The catalysed reaction is IMP + L-aspartate + GTP = N(6)-(1,2-dicarboxyethyl)-AMP + GDP + phosphate + 2 H(+). Its pathway is purine metabolism; AMP biosynthesis via de novo pathway; AMP from IMP: step 1/2. Functionally, plays an important role in the de novo pathway of purine nucleotide biosynthesis. Catalyzes the first committed step in the biosynthesis of AMP from IMP. In Halothermothrix orenii (strain H 168 / OCM 544 / DSM 9562), this protein is Adenylosuccinate synthetase.